A 238-amino-acid polypeptide reads, in one-letter code: Aliphatic sulfonates import ATP-binding protein SsuB (238 aa).

One can recognise an ABC transporter domain in the interval 7–221; the sequence is VSLHQVHQQF…RPGDAAFASL (215 aa). Position 39–46 (39–46) interacts with ATP; sequence GRSGSGKT.

This sequence belongs to the ABC transporter superfamily. Aliphatic sulfonates importer (TC 3.A.1.17.2) family. In terms of assembly, the complex is composed of two ATP-binding proteins (SsuB), two transmembrane proteins (SsuC) and a solute-binding protein (SsuA).

The protein localises to the cell inner membrane. It catalyses the reaction ATP + H2O + aliphatic sulfonate-[sulfonate-binding protein]Side 1 = ADP + phosphate + aliphatic sulfonateSide 2 + [sulfonate-binding protein]Side 1.. Its function is as follows. Part of the ABC transporter complex SsuABC involved in aliphatic sulfonates import. Responsible for energy coupling to the transport system. The polypeptide is Aliphatic sulfonates import ATP-binding protein SsuB (Granulibacter bethesdensis (strain ATCC BAA-1260 / CGDNIH1)).